A 367-amino-acid chain; its full sequence is Alginate lyase (367 aa).

Residues 1–27 form the signal peptide; that stretch reads MKTSHLIRITLPGALAAALLASQVSQA. Substrate-binding positions include 65–66, 138–139, and Tyr-256; these read SK and HT.

This sequence belongs to the polysaccharide lyase 5 family.

It localises to the periplasm. It catalyses the reaction Eliminative cleavage of alginate to give oligosaccharides with 4-deoxy-alpha-L-erythro-hex-4-enuronosyl groups at their non-reducing ends and beta-D-mannuronate at their reducing end.. Its function is as follows. Catalyzes the depolymerization of alginate by cleaving the beta-1,4 glycosidic bond between two adjacent sugar residues via a beta-elimination mechanism. May serve to degrade mislocalized alginate that is trapped in the periplasmic space. In Pseudomonas paraeruginosa (strain DSM 24068 / PA7) (Pseudomonas aeruginosa (strain PA7)), this protein is Alginate lyase.